A 260-amino-acid chain; its full sequence is tRNA pseudouridine synthase C (260 aa).

Asp-54 is a catalytic residue.

This sequence belongs to the pseudouridine synthase RluA family.

The catalysed reaction is uridine(65) in tRNA = pseudouridine(65) in tRNA. In terms of biological role, responsible for synthesis of pseudouridine from uracil-65 in transfer RNAs. The polypeptide is tRNA pseudouridine synthase C (truC) (Escherichia coli O6:H1 (strain CFT073 / ATCC 700928 / UPEC)).